The primary structure comprises 34 residues: Cytochrome b6-f complex subunit 7 (34 aa).

Residues 9–29 (ALLSFGLIFVGWALGALLLKI) traverse the membrane as a helical segment.

Belongs to the PetM family. The 4 large subunits of the cytochrome b6-f complex are cytochrome b6, subunit IV (17 kDa polypeptide, PetD), cytochrome f and the Rieske protein, while the 4 small subunits are PetG, PetL, PetM and PetN. The complex functions as a dimer.

It localises to the cellular thylakoid membrane. Functionally, component of the cytochrome b6-f complex, which mediates electron transfer between photosystem II (PSII) and photosystem I (PSI), cyclic electron flow around PSI, and state transitions. The protein is Cytochrome b6-f complex subunit 7 of Nostoc sp. (strain PCC 7120 / SAG 25.82 / UTEX 2576).